Consider the following 189-residue polypeptide: GTP cyclohydrolase 1 (189 aa).

3 residues coordinate Zn(2+): C79, H82, and C150.

Belongs to the GTP cyclohydrolase I family. Homomer.

The catalysed reaction is GTP + H2O = 7,8-dihydroneopterin 3'-triphosphate + formate + H(+). The protein operates within cofactor biosynthesis; 7,8-dihydroneopterin triphosphate biosynthesis; 7,8-dihydroneopterin triphosphate from GTP: step 1/1. The sequence is that of GTP cyclohydrolase 1 from Rickettsia peacockii (strain Rustic).